The primary structure comprises 157 residues: Putative pre-16S rRNA nuclease (157 aa).

Belongs to the YqgF nuclease family.

The protein resides in the cytoplasm. Its function is as follows. Could be a nuclease involved in processing of the 5'-end of pre-16S rRNA. The sequence is that of Putative pre-16S rRNA nuclease from Parasynechococcus marenigrum (strain WH8102).